Reading from the N-terminus, the 492-residue chain is Cytochrome P450 2A12 (492 aa).

C437 lines the heme pocket.

Belongs to the cytochrome P450 family. Heme is required as a cofactor. In terms of tissue distribution, liver.

It is found in the endoplasmic reticulum membrane. It localises to the microsome membrane. The catalysed reaction is an organic molecule + reduced [NADPH--hemoprotein reductase] + O2 = an alcohol + oxidized [NADPH--hemoprotein reductase] + H2O + H(+). In terms of biological role, highly active in the 7-alpha-hydroxylation of testosterone. In Mus musculus (Mouse), this protein is Cytochrome P450 2A12 (Cyp2a12).